The primary structure comprises 509 residues: uncharacterized protein (509 aa).

Positions 108 to 225 constitute a G domain; sequence GKSSLCNLLA…KRHKPLFPVI (118 aa).

This is an uncharacterized protein from Acinetobacter baylyi (strain ATCC 33305 / BD413 / ADP1).